Reading from the N-terminus, the 866-residue chain is Leucine--tRNA ligase (866 aa).

The 'HIGH' region motif lies at 42-52 (PYPSGKLHMGH). The short motif at 624–628 (TMSKS) is the 'KMSKS' region element. Lys627 contributes to the ATP binding site.

The protein belongs to the class-I aminoacyl-tRNA synthetase family.

The protein localises to the cytoplasm. It catalyses the reaction tRNA(Leu) + L-leucine + ATP = L-leucyl-tRNA(Leu) + AMP + diphosphate. This is Leucine--tRNA ligase from Nitrosospira multiformis (strain ATCC 25196 / NCIMB 11849 / C 71).